The sequence spans 158 residues: Hypoxanthine DNA glycosylase (158 aa).

Asparagine 39 is a catalytic residue.

It belongs to the uracil-DNA glycosylase (UDG) superfamily. Type 6 (HDG) family.

Functionally, excises hypoxanthine, a deamination product of adenine, from double-stranded DNA. Acts on double-stranded DNA containing G/I, T/I, A/I and C/I base pairs, but not on single-stranded inosine-containing DNA. Also has minor xanthine DNA glycosylase activity. Lacks any detectable uracil-DNA glycosylase activity. The sequence is that of Hypoxanthine DNA glycosylase from Methanosarcina barkeri (strain Fusaro / DSM 804).